The following is a 101-amino-acid chain: NAD(P)H-quinone oxidoreductase subunit 4L, chloroplastic (101 aa).

Transmembrane regions (helical) follow at residues 2–22 (ILEH…YGLI), 32–52 (MCLE…SDFF), and 61–81 (IFSI…LAIV).

It belongs to the complex I subunit 4L family. As to quaternary structure, NDH is composed of at least 16 different subunits, 5 of which are encoded in the nucleus.

The protein resides in the plastid. It localises to the chloroplast thylakoid membrane. The catalysed reaction is a plastoquinone + NADH + (n+1) H(+)(in) = a plastoquinol + NAD(+) + n H(+)(out). The enzyme catalyses a plastoquinone + NADPH + (n+1) H(+)(in) = a plastoquinol + NADP(+) + n H(+)(out). Its function is as follows. NDH shuttles electrons from NAD(P)H:plastoquinone, via FMN and iron-sulfur (Fe-S) centers, to quinones in the photosynthetic chain and possibly in a chloroplast respiratory chain. The immediate electron acceptor for the enzyme in this species is believed to be plastoquinone. Couples the redox reaction to proton translocation, and thus conserves the redox energy in a proton gradient. This Eucalyptus globulus subsp. globulus (Tasmanian blue gum) protein is NAD(P)H-quinone oxidoreductase subunit 4L, chloroplastic.